Reading from the N-terminus, the 414-residue chain is 3-oxo-tetronate kinase (414 aa).

Residues Ser-255, 355 to 358 (GGET), and Gly-398 each bind ATP.

The protein belongs to the four-carbon acid sugar kinase family.

The enzyme catalyses 3-dehydro-L-erythronate + ATP = 3-dehydro-4-O-phospho-L-erythronate + ADP + H(+). It carries out the reaction 3-dehydro-D-erythronate + ATP = 3-dehydro-4-O-phospho-D-erythronate + ADP + H(+). In terms of biological role, catalyzes the ATP-dependent phosphorylation of 3-oxo-tetronate to 3-oxo-tetronate 4-phosphate. This Actinobacillus succinogenes (strain ATCC 55618 / DSM 22257 / CCUG 43843 / 130Z) protein is 3-oxo-tetronate kinase.